Reading from the N-terminus, the 452-residue chain is MEKLMTESGLKPVVIDSNQDLSRVYCGICSNIGDDDYDGDAVVVDGDLISTPFCSHKFCKACWSKYLKKNFFSVEKNHTAISCPDRDCRAAVGPETVEKLTVRDQAMYELYILKSYREKYLGWKLKLCPARGCNYVIEFHLASEDEEHSLNIVCLCGHIFCWRCMLESHRPVTCNNASDWLSRDLEKLIEEVDKPSTVSWIDANTKPCPHCFIPVEIDGERPWAQFLTCVCSGRFCWKCFRSPETHGTSGSCLAPARSSNVGFNHWNRAKPGISCLDLWNASQVNLVNAKYELEAFEESIIKKPSDLKEQDVKVLREGLMLIVQCRQFLKWSCAYDYIHTEYDMAKREYLRFLQQNASGIVHSFSQSIKEETEAKELTCGKLLSETTNIGNFFYHFIKTLREGLPEVQAESYDNYGGPYWLCDRCTYGNSWFQRACKMCCDPTASKMDELSD.

Residues 22–256 (SRVYCGICSN…GTSGSCLAPA (235 aa)) are TRIAD supradomain. Zn(2+)-binding residues include C26, C29, C54, H56, C59, C62, C83, C88, C128, C133, C154, C156, C161, C164, H169, C174, C208, C211, C229, C231, C236, C239, H246, and C252. An RING-type 1 zinc finger spans residues 26 to 88 (CGICSNIGDD…TAISCPDRDC (63 aa)). Residues 106–174 (AMYELYILKS…MLESHRPVTC (69 aa)) form an IBR-type zinc finger. Residues 208-239 (CPHCFIPVEIDGERPWAQFLTCVCSGRFCWKC) form an RING-type 2; atypical zinc finger. The RanBP2-type zinc finger occupies 414–445 (NYGGPYWLCDRCTYGNSWFQRACKMCCDPTAS).

Belongs to the RBR family. Ariadne subfamily. Requires Zn(2+) as cofactor. In terms of tissue distribution, ubiquitous.

It catalyses the reaction [E2 ubiquitin-conjugating enzyme]-S-ubiquitinyl-L-cysteine + [acceptor protein]-L-lysine = [E2 ubiquitin-conjugating enzyme]-L-cysteine + [acceptor protein]-N(6)-ubiquitinyl-L-lysine.. The protein operates within protein modification; protein ubiquitination. Might act as an E3 ubiquitin-protein ligase, or as part of E3 complex, which accepts ubiquitin from specific E2 ubiquitin-conjugating enzymes and then transfers it to substrates. The sequence is that of Probable E3 ubiquitin-protein ligase ARI15 (ARI15) from Arabidopsis thaliana (Mouse-ear cress).